Reading from the N-terminus, the 495-residue chain is MFS transporter prlL (495 aa).

The segment at 1–24 (MAQSFANEHDPAKRAEERGHVGTI) is disordered. Over residues 7 to 20 (NEHDPAKRAEERGH) the composition is skewed to basic and acidic residues. Transmembrane regions (helical) follow at residues 102–122 (IALM…NVLL), 130–150 (WIAI…GAHN), 159–179 (FLLG…LTFW), 189–209 (VAFI…IAYA), 224–244 (WLFI…LFFL), 292–312 (LWAH…LSLF), 329–349 (LMTV…SWSA), 356–376 (GLHS…SAVL), 386–406 (GCLI…LGWL), 418–438 (LAIA…GVWI), and 449–469 (PTGH…CVAL).

It belongs to the major facilitator superfamily.

The protein resides in the cell membrane. In terms of biological role, efflux pump that might be required for efficient secretion of pyrrolocin or other secondary metabolies produced by the pyrrolocin gene cluster. The chain is MFS transporter prlL from Fungal sp. (strain NRRL 50135).